We begin with the raw amino-acid sequence, 541 residues long: 2-succinyl-5-enolpyruvyl-6-hydroxy-3-cyclohexene-1-carboxylate synthase (541 aa).

The protein belongs to the TPP enzyme family. MenD subfamily. Homodimer. Mg(2+) serves as cofactor. It depends on Mn(2+) as a cofactor. The cofactor is thiamine diphosphate.

The catalysed reaction is isochorismate + 2-oxoglutarate + H(+) = 5-enolpyruvoyl-6-hydroxy-2-succinyl-cyclohex-3-ene-1-carboxylate + CO2. The protein operates within quinol/quinone metabolism; 1,4-dihydroxy-2-naphthoate biosynthesis; 1,4-dihydroxy-2-naphthoate from chorismate: step 2/7. Its pathway is quinol/quinone metabolism; menaquinone biosynthesis. Its function is as follows. Catalyzes the thiamine diphosphate-dependent decarboxylation of 2-oxoglutarate and the subsequent addition of the resulting succinic semialdehyde-thiamine pyrophosphate anion to isochorismate to yield 2-succinyl-5-enolpyruvyl-6-hydroxy-3-cyclohexene-1-carboxylate (SEPHCHC). This chain is 2-succinyl-5-enolpyruvyl-6-hydroxy-3-cyclohexene-1-carboxylate synthase, found in Rhodococcus jostii (strain RHA1).